Consider the following 78-residue polypeptide: Neurogranin (78 aa).

M1 bears the N-acetylmethionine mark. An IQ domain is found at 26–49; sequence ANAAAAKIQASFRGHMARKKIKSG. S36 carries the phosphoserine; by PHK and PKC modification. The disordered stretch occupies residues 38-78; it reads RGHMARKKIKSGERGRKGPGPGGPGGAGGARGGAGGGPSGD. One can recognise a Collagen-like domain in the interval 50–78; sequence ERGRKGPGPGGPGGAGGARGGAGGGPSGD. The segment covering 55 to 78 has biased composition (gly residues); that stretch reads GPGPGGPGGAGGARGGAGGGPSGD. R68 carries the post-translational modification Citrulline; partial. R68 bears the Omega-N-methylarginine mark.

The protein belongs to the neurogranin family. In terms of processing, the N-terminus is blocked. Phosphorylated at Ser-36 by PHK and PKC. Phosphorylation prevents interaction with Calmodulin and interrupts several learning- and memory-associated functions. Is highly enriched in brain. Accumulates postsynaptically in dendritic spines of neostriatal neurons.

Acts as a 'third messenger' substrate of protein kinase C-mediated molecular cascades during synaptic development and remodeling. Binds to calmodulin in the absence of calcium. This is Neurogranin (NRGN) from Bos taurus (Bovine).